A 281-amino-acid chain; its full sequence is Large ribosomal subunit protein uL2 (281 aa).

The interval 224 to 281 (RGSAMNPNDHPHGGGEGHQPIGRKSPMTPWGKKALGVKTRKTKKASNQFIIRRRKESK) is disordered.

This sequence belongs to the universal ribosomal protein uL2 family. In terms of assembly, part of the 50S ribosomal subunit. Forms a bridge to the 30S subunit in the 70S ribosome.

Functionally, one of the primary rRNA binding proteins. Required for association of the 30S and 50S subunits to form the 70S ribosome, for tRNA binding and peptide bond formation. It has been suggested to have peptidyltransferase activity; this is somewhat controversial. Makes several contacts with the 16S rRNA in the 70S ribosome. The chain is Large ribosomal subunit protein uL2 from Metamycoplasma arthritidis (strain 158L3-1) (Mycoplasma arthritidis).